The following is a 411-amino-acid chain: Serine hydroxymethyltransferase (411 aa).

(6S)-5,6,7,8-tetrahydrofolate contacts are provided by residues leucine 119 and 123–125 (GHL). Lysine 228 is modified (N6-(pyridoxal phosphate)lysine).

Belongs to the SHMT family. In terms of assembly, homodimer. It depends on pyridoxal 5'-phosphate as a cofactor.

The protein resides in the cytoplasm. The enzyme catalyses (6R)-5,10-methylene-5,6,7,8-tetrahydrofolate + glycine + H2O = (6S)-5,6,7,8-tetrahydrofolate + L-serine. It functions in the pathway one-carbon metabolism; tetrahydrofolate interconversion. The protein operates within amino-acid biosynthesis; glycine biosynthesis; glycine from L-serine: step 1/1. Its function is as follows. Catalyzes the reversible interconversion of serine and glycine with tetrahydrofolate (THF) serving as the one-carbon carrier. This reaction serves as the major source of one-carbon groups required for the biosynthesis of purines, thymidylate, methionine, and other important biomolecules. Also exhibits THF-independent aldolase activity toward beta-hydroxyamino acids, producing glycine and aldehydes, via a retro-aldol mechanism. In Clostridium kluyveri (strain NBRC 12016), this protein is Serine hydroxymethyltransferase.